We begin with the raw amino-acid sequence, 242 residues long: tRNA pseudouridine synthase A (242 aa).

Catalysis depends on Asp-51, which acts as the Nucleophile. Residue Tyr-107 participates in substrate binding.

The protein belongs to the tRNA pseudouridine synthase TruA family. Homodimer.

It catalyses the reaction uridine(38/39/40) in tRNA = pseudouridine(38/39/40) in tRNA. Its function is as follows. Formation of pseudouridine at positions 38, 39 and 40 in the anticodon stem and loop of transfer RNAs. The sequence is that of tRNA pseudouridine synthase A from Helicobacter pylori (strain HPAG1).